Here is a 369-residue protein sequence, read N- to C-terminus: tRNA/tmRNA (uracil-C(5))-methyltransferase (369 aa).

S-adenosyl-L-methionine is bound by residues Q190, Y218, N223, E239, and D301. Residue C326 is the Nucleophile of the active site. E360 functions as the Proton acceptor in the catalytic mechanism.

This sequence belongs to the class I-like SAM-binding methyltransferase superfamily. RNA M5U methyltransferase family. TrmA subfamily.

It catalyses the reaction uridine(54) in tRNA + S-adenosyl-L-methionine = 5-methyluridine(54) in tRNA + S-adenosyl-L-homocysteine + H(+). It carries out the reaction uridine(341) in tmRNA + S-adenosyl-L-methionine = 5-methyluridine(341) in tmRNA + S-adenosyl-L-homocysteine + H(+). In terms of biological role, dual-specificity methyltransferase that catalyzes the formation of 5-methyluridine at position 54 (m5U54) in all tRNAs, and that of position 341 (m5U341) in tmRNA (transfer-mRNA). The sequence is that of tRNA/tmRNA (uracil-C(5))-methyltransferase from Vibrio parahaemolyticus serotype O3:K6 (strain RIMD 2210633).